Consider the following 60-residue polypeptide: Large ribosomal subunit protein uL30 (60 aa).

It belongs to the universal ribosomal protein uL30 family. In terms of assembly, part of the 50S ribosomal subunit.

The chain is Large ribosomal subunit protein uL30 from Flavobacterium psychrophilum (strain ATCC 49511 / DSM 21280 / CIP 103535 / JIP02/86).